Reading from the N-terminus, the 428-residue chain is Enolase (428 aa).

A (2R)-2-phosphoglycerate-binding site is contributed by Q165. E207 acts as the Proton donor in catalysis. Residues D244, E285, and D312 each contribute to the Mg(2+) site. The (2R)-2-phosphoglycerate site is built by K337, R366, S367, and K388. The active-site Proton acceptor is K337.

This sequence belongs to the enolase family. In terms of assembly, component of the RNA degradosome, a multiprotein complex involved in RNA processing and mRNA degradation. It depends on Mg(2+) as a cofactor.

It is found in the cytoplasm. The protein resides in the secreted. The protein localises to the cell surface. It carries out the reaction (2R)-2-phosphoglycerate = phosphoenolpyruvate + H2O. The protein operates within carbohydrate degradation; glycolysis; pyruvate from D-glyceraldehyde 3-phosphate: step 4/5. Functionally, catalyzes the reversible conversion of 2-phosphoglycerate (2-PG) into phosphoenolpyruvate (PEP). It is essential for the degradation of carbohydrates via glycolysis. This chain is Enolase, found in Coxiella burnetii (strain CbuK_Q154) (Coxiella burnetii (strain Q154)).